Here is a 257-residue protein sequence, read N- to C-terminus: 5'-nucleotidase SurE (257 aa).

The a divalent metal cation site is built by D9, D10, S40, and N93.

Belongs to the SurE nucleotidase family. A divalent metal cation is required as a cofactor.

Its subcellular location is the cytoplasm. The enzyme catalyses a ribonucleoside 5'-phosphate + H2O = a ribonucleoside + phosphate. Its function is as follows. Nucleotidase that shows phosphatase activity on nucleoside 5'-monophosphates. This chain is 5'-nucleotidase SurE, found in Campylobacter hominis (strain ATCC BAA-381 / DSM 21671 / CCUG 45161 / LMG 19568 / NCTC 13146 / CH001A).